A 363-amino-acid chain; its full sequence is Peptide chain release factor 1 (363 aa).

Gln237 carries the post-translational modification N5-methylglutamine. The disordered stretch occupies residues 281–302; that stretch reads QQAEDEKSHAEEQTIRRSLVAS. Residues 282–295 show a composition bias toward basic and acidic residues; it reads QAEDEKSHAEEQTI.

The protein belongs to the prokaryotic/mitochondrial release factor family. Methylated by PrmC. Methylation increases the termination efficiency of RF1.

The protein localises to the cytoplasm. In terms of biological role, peptide chain release factor 1 directs the termination of translation in response to the peptide chain termination codons UAG and UAA. The chain is Peptide chain release factor 1 from Psychromonas ingrahamii (strain DSM 17664 / CCUG 51855 / 37).